We begin with the raw amino-acid sequence, 626 residues long: MRMLLIHADYLEYEVRDKALKNPEPISDEQRKGRLDEVLAVFISVEKVDEANPEEVVGKAVAEIEDVAKQVKAERIFVYPFAHLSSELAKPDVALEVLKKIEEKLKEKGYEVKRAPFGYYKAFKLSCKGHPLAELSRTIVPEEGVSKEERNIALEKEEKELVSYWYILTPEGELIEVDKFDFTGHENLRKFVNYEIAKNRIADREPPHVRLMLEHELVDYEPGSDAGNLRYYPKGRLIKGLLEQYVTEKVVEYGAMEVETPIMYDFEHPALEKYLNRFPARQYIVKSGDKKFFLRFAACFGQFLIKKDAIISYRNLPLRMYELTRYSFRREKSGELSGLRRLRAFTMPDMHTVAKDLKQAMDEFKKQYKLSMEVLRGVGLTPDDYEVAIRFTHDFWEANKDFIVELAKIIGKPVLIEMWDQRFFYFILKFEFNFVDNLDKAAALSTVQIDVENAERFGITYYDEEGKERYPLILHCSPSGAIERVMYAILEKQAKLQAQGKKPMFPLWLSPIQVRVIPVSDDVLDYALYVAGKLEGAKIRVDVDDTNDRLNKKIRKAEKEWVPYIIVVGKNEKEQNTVTVRRREDGKQVEMQLEDLIREIRQKTEGFPYKPRPLPLLLSRRPKFRG.

Residues M1–G144 form an editing domain region. Residues P207–P506 are catalytic. Zn(2+) is bound by residues C299, H351, and H475.

The protein belongs to the class-II aminoacyl-tRNA synthetase family. In terms of assembly, homodimer. Zn(2+) is required as a cofactor.

The protein resides in the cytoplasm. The enzyme catalyses tRNA(Thr) + L-threonine + ATP = L-threonyl-tRNA(Thr) + AMP + diphosphate + H(+). Catalyzes the attachment of threonine to tRNA(Thr) in a two-step reaction: L-threonine is first activated by ATP to form Thr-AMP and then transferred to the acceptor end of tRNA(Thr). Also edits incorrectly charged L-seryl-tRNA(Thr). The chain is Threonine--tRNA ligase from Thermococcus gammatolerans (strain DSM 15229 / JCM 11827 / EJ3).